A 122-amino-acid chain; its full sequence is Holo-[acyl-carrier-protein] synthase (122 aa).

Mg(2+) is bound by residues aspartate 8 and glutamate 56.

This sequence belongs to the P-Pant transferase superfamily. AcpS family. The cofactor is Mg(2+).

It localises to the cytoplasm. The enzyme catalyses apo-[ACP] + CoA = holo-[ACP] + adenosine 3',5'-bisphosphate + H(+). Its function is as follows. Transfers the 4'-phosphopantetheine moiety from coenzyme A to a Ser of acyl-carrier-protein. The sequence is that of Holo-[acyl-carrier-protein] synthase from Alkaliphilus oremlandii (strain OhILAs) (Clostridium oremlandii (strain OhILAs)).